The sequence spans 418 residues: MQTEATFILGDWEITVSNCRFTCSSLTCGPLYRSSGDYTRLRIPFSLDRLIRDHAIFGLVPNIEDLLTHGSCVAVVADANATGGNARRIVAPGVINNFSEPIGIWVRGPPPQTRKEAIKFCIFFVSPLPPREMTTYVFKGGDLPPGAEEPETLHSAEAPLPSRETLVTGQLRSTSPRTYTGYFHSPVPLSFLDLLTFESMGCENVEGDPEPLTPKYLTFTQTGERLYKVTVHNTHSTACKKARIRFVYRPTPSARQLVMGQASPLITTPLGARVFAVYPDCEKTIPPQETTTLRIQLLFEQHGANAGECAFVIMGLARETKFVSFPAVLLPGKHEHLTVFNPQTHPLTIQRDTIVGVAMACYIHPGKAASQAPYSFYDCKEESWHVGLFQIKHGPGGVCTPPCHVAIRADRHEEPMQS.

This chain is Protein ORF10 (ORF10), found in Human herpesvirus 8 type P (isolate GK18) (HHV-8).